The chain runs to 446 residues: MTAKNVGLPSTNAKLRGFIDQNFSPSKGNISLVAFPVSSTNSPTKILPKTLGPINVNVGPQMIISTPQRIANSGSVLIGNPYTPAPAMVTQTHIAEAAGWVPSDRKRAREFIDSDFSESKRSKKGDKNGKGLRHFSMKVCEKVQRKGTTSYNEVADELVSEFTNSNNHLAADSAYDQENIRRRVYDALNVLMAMNIISSLPTGKKRNQVDCNSAQECQNLEIEKQRRIERIKQKRAQLQELLLQQIAFKNLVQRNRQNEQQNQGPPAVNSTIQLPFIIINTSRKTVIDCSISSDKFEYLFNFDNTFEIHDDIEVLKRMGMSFGLESGKCSLEDLKIARSLVPKALEGYITDISTGPSWLNQGLLLNSTQSVSNLDPTTGATVPQSSVNQGLCLDAEVALATGQLPASNSHQSSSAASHFSESRGETPCSFNDEDEEDEEEDPSSPE.

Position 2 is an N-acetylthreonine (Thr-2). 2 positions are modified to phosphoserine; by CDK2: Ser-24 and Ser-42. The tract at residues 60-82 (PQMIISTPQRIANSGSVLIGNPY) is interaction with CEBPA. The short motif at 103–118 (SDRKRAREFIDSDFSE) is the Nuclear localization signal element. A Phosphoserine modification is found at Ser-122. The DNA-binding element occupies 129–210 (GKGLRHFSMK…PTGKKRNQVD (82 aa)). A DEF box motif is present at residues 176-210 (DQENIRRRVYDALNVLMAMNIISSLPTGKKRNQVD). A dimerization region spans residues 219 to 292 (NLEIEKQRRI…RKTVIDCSIS (74 aa)). The segment at 229-261 (ERIKQKRAQLQELLLQQIAFKNLVQRNRQNEQQ) is DCB1. Positions 274-330 (LPFIIINTSRKTVIDCSISSDKFEYLFNFDNTFEIHDDIEVLKRMGMSFGLESGKCS) are DCB2. The tract at residues 404–446 (LPASNSHQSSSAASHFSESRGETPCSFNDEDEEDEEEDPSSPE) is disordered. Over residues 406–419 (ASNSHQSSSAASHF) the composition is skewed to low complexity. Over residues 431 to 446 (NDEDEEDEEEDPSSPE) the composition is skewed to acidic residues.

This sequence belongs to the E2F/DP family. Component of the DRTF1/E2F transcription factor complex. Forms heterodimers with E2F family members. The complex can interact with hypophosphorylated retinoblastoma protein RB1 and related proteins (RBL1 and RBL2) that inhibit the E2F transactivation domain. During the cell cycle, RB becomes phosphorylated in mid-to-late G1 phase, detaches from the DRTF1/E2F complex rendering E2F transcriptionally active. Interacts with GMCL. Component of the DREAM complex (also named LINC complex) at least composed of E2F4, E2F5, LIN9, LIN37, LIN52, LIN54, MYBL1, MYBL2, RBL1, RBL2, RBBP4, TFDP1 and TFDP2. The complex exists in quiescent cells where it represses cell cycle-dependent genes. It dissociates in S phase when LIN9, LIN37, LIN52 and LIN54 form a subcomplex that binds to MYBL2. The complex TFDP2:E2F1 interacts with CEBPA; the interaction prevents CEBPA binding to target gene promoters and represses its transcriptional activity. In terms of processing, phosphorylation by E2F1-bound cyclin A-CDK2, in the S phase, inhibits E2F-mediated DNA binding and transactivation. Expressed in all tissues examined. Highest levels in spleen and heart.

It is found in the nucleus. Its function is as follows. Can stimulate E2F-dependent transcription. Binds DNA cooperatively with E2F family members through the E2 recognition site, 5'-TTTC[CG]CGC-3', found in the promoter region of a number of genes whose products are involved in cell cycle regulation or in DNA replication. The TFDP2:E2F complex functions in the control of cell-cycle progression from G1 to S phase. The E2F1:DP complex appears to mediate both cell proliferation and apoptosis. Blocks adipocyte differentiation by repressing CEBPA binding to its target gene promoters. This is Transcription factor Dp-2 (Tfdp2) from Mus musculus (Mouse).